The sequence spans 359 residues: Chondroadherin (359 aa).

Positions 1–22 (MVRPMLLLSLGLLAGLLPALAA) are cleaved as a signal peptide. A disulfide bond links Cys-23 and Cys-38. In terms of domain architecture, LRRNT spans 23 to 52 (CPQNCHCHSDLQHVICDKVGLQKIPKVSEK). 9 LRR repeats span residues 76–97 (NLVS…AFRG), 100–121 (QLIY…AFDD), 124–145 (ELTY…LLSP), 148–169 (NLFI…AFQG), 172–193 (DLRW…ALDD), 196–217 (NLAK…ALSK), 220–241 (VVEE…AFQS), 245–266 (YLET…AFLG), and 269–290 (TLKH…FPFD). A glycan (O-linked (GalNAc...) serine) is linked at Ser-144. The LRRCT domain occupies 300–348 (NPWKCTCQLRGLRRWLEAKASRPDATCASPAKFKGQHIRDTDAFRSCKF). Intrachain disulfides connect Cys-304–Cys-346 and Cys-306–Cys-326.

The protein belongs to the small leucine-rich proteoglycan (SLRP) family. SLRP class IV subfamily. Mostly monomeric. Interacts with collagen type II. Present in chondrocytes at all ages.

The protein resides in the secreted. Its subcellular location is the extracellular space. It is found in the extracellular matrix. In terms of biological role, promotes attachment of chondrocytes, fibroblasts, and osteoblasts. This binding is mediated (at least for chondrocytes and fibroblasts) by the integrin alpha(2)beta(1). May play an important role in the regulation of chondrocyte growth and proliferation. The polypeptide is Chondroadherin (CHAD) (Homo sapiens (Human)).